The chain runs to 168 residues: MKEGKALELFNLSTFVFTIINLLVLYYILKRLLFKPVTKFLEDRENKIKSALEDADKQREEAYSLKAQYEEKLQNAENEGRAIIEKAQKEAEERASEIIKSANKEAESIIEKAKEEAVLEKIKAMHELRAEMSHLIIEAASKVLEKKLPVEDEDLIKEVIEEAGSWNK.

The chain crosses the membrane as a helical span at residues 9–29 (LFNLSTFVFTIINLLVLYYIL).

Belongs to the ATPase B chain family. In terms of assembly, F-type ATPases have 2 components, F(1) - the catalytic core - and F(0) - the membrane proton channel. F(1) has five subunits: alpha(3), beta(3), gamma(1), delta(1), epsilon(1). F(0) has three main subunits: a(1), b(2) and c(10-14). The alpha and beta chains form an alternating ring which encloses part of the gamma chain. F(1) is attached to F(0) by a central stalk formed by the gamma and epsilon chains, while a peripheral stalk is formed by the delta and b chains.

Its subcellular location is the cell membrane. In terms of biological role, f(1)F(0) ATP synthase produces ATP from ADP in the presence of a proton or sodium gradient. F-type ATPases consist of two structural domains, F(1) containing the extramembraneous catalytic core and F(0) containing the membrane proton channel, linked together by a central stalk and a peripheral stalk. During catalysis, ATP synthesis in the catalytic domain of F(1) is coupled via a rotary mechanism of the central stalk subunits to proton translocation. Functionally, component of the F(0) channel, it forms part of the peripheral stalk, linking F(1) to F(0). The sequence is that of ATP synthase subunit b from Caldanaerobacter subterraneus subsp. tengcongensis (strain DSM 15242 / JCM 11007 / NBRC 100824 / MB4) (Thermoanaerobacter tengcongensis).